We begin with the raw amino-acid sequence, 221 residues long: Alpha-ketoglutarate-dependent dioxygenase alkB homolog 7, mitochondrial (221 aa).

The transit peptide at 1–23 directs the protein to the mitochondrion; that stretch reads MAGSRRLAMRLLSGCAWVRGSDS. Residues His-121 and Asp-123 each contribute to the Fe cation site. A 2-oxoglutarate-binding site is contributed by Tyr-165. Position 177 (His-177) interacts with Fe cation. 2-oxoglutarate-binding positions include 197–199 and Arg-203; that span reads RIS.

This sequence belongs to the alkB family. The cofactor is Fe(2+). As to expression, widely expressed.

It is found in the mitochondrion matrix. In terms of biological role, may function as protein hydroxylase; can catalyze auto-hydroxylation at Leu-110 (in vitro), but this activity may be due to the absence of the true substrate. Required to induce programmed necrosis in response to DNA damage caused by cytotoxic alkylating agents. Acts by triggering the collapse of mitochondrial membrane potential and loss of mitochondrial function that leads to energy depletion and cell death. ALKBH7-mediated necrosis is probably required to prevent the accumulation of cells with DNA damage. Does not display DNA demethylase activity. Involved in fatty acid metabolism. The sequence is that of Alpha-ketoglutarate-dependent dioxygenase alkB homolog 7, mitochondrial (Alkbh7) from Mus musculus (Mouse).